Consider the following 501-residue polypeptide: Envelope glycoprotein C homolog (501 aa).

A signal peptide spans 1 to 27 (MLTPRVLRALGWTGLFFLLLSPSNVLG). Residues 28–465 (ASLSRDLETP…DATPAARGTP (438 aa)) lie on the Virion surface side of the membrane. A glycan (N-linked (GlcNAc...) asparagine; by host) is linked at asparagine 46. The tract at residues 53–86 (PLTEVPHAPSTESVSTNSESTNEHTITETTGKNA) is disordered. Residues 62 to 72 (STESVSTNSES) are compositionally biased toward low complexity. N-linked (GlcNAc...) asparagine; by host glycosylation is found at asparagine 91, asparagine 100, asparagine 120, asparagine 212, asparagine 354, asparagine 400, and asparagine 429. The Ig-like domain maps to 258 to 356 (PASVDVLAPP…GDMISTTNAT (99 aa)). A helical transmembrane segment spans residues 466 to 492 (MVITVTAVLGLAVILGMGIIMTALCLY). Over 493-501 (NSTRKNIRL) the chain is Cytoplasmic.

It belongs to the herpesviridae glycoprotein C family.

Its subcellular location is the secreted. The protein resides in the host cell membrane. May play an immunoevasive role in the pathogenesis of Marek's disease. It is a candidate for causing the early-stage immunosuppression that occurs after MDHV infection. The sequence is that of Envelope glycoprotein C homolog (gC) from Gallus gallus (Chicken).